Reading from the N-terminus, the 85-residue chain is Depressant insect toxin BmK ITa1 (85 aa).

An N-terminal signal peptide occupies residues 1-21 (MKLFLLLLISASMLIDGLVNA). One can recognise an LCN-type CS-alpha/beta domain in the interval 22–82 (DGYIRGSNGC…TWKSESNTCG (61 aa)). Cystine bridges form between C31–C81, C35–C56, C42–C63, and C46–C65. Residue G82 is modified to Glycine amide.

Belongs to the long (4 C-C) scorpion toxin superfamily. Sodium channel inhibitor family. Beta subfamily. In terms of tissue distribution, expressed by the venom gland.

The protein resides in the secreted. Functionally, depressant insect toxins cause a transient contraction paralysis followed by a slow flaccid paralysis. They bind voltage-independently to sodium channels (Nav) and block action potentials, primarily by depolarizing the axonal membrane and suppressing the sodium current. This Olivierus martensii (Manchurian scorpion) protein is Depressant insect toxin BmK ITa1.